The chain runs to 334 residues: DNA-directed RNA polymerase subunit alpha (334 aa).

The tract at residues 1–233 is alpha N-terminal domain (alpha-NTD); it reads MADQTISNVL…NLFTPLVSQE (233 aa). The tract at residues 263–334 is alpha C-terminal domain (alpha-CTD); it reads DNENSYNLYN…QLKKRFKIQL (72 aa).

This sequence belongs to the RNA polymerase alpha chain family. In plastids the minimal PEP RNA polymerase catalytic core is composed of four subunits: alpha, beta, beta', and beta''. When a (nuclear-encoded) sigma factor is associated with the core the holoenzyme is formed, which can initiate transcription.

It localises to the plastid. The protein resides in the chloroplast. The catalysed reaction is RNA(n) + a ribonucleoside 5'-triphosphate = RNA(n+1) + diphosphate. Its function is as follows. DNA-dependent RNA polymerase catalyzes the transcription of DNA into RNA using the four ribonucleoside triphosphates as substrates. The chain is DNA-directed RNA polymerase subunit alpha from Chaetosphaeridium globosum (Charophycean green alga).